The chain runs to 56 residues: Large ribosomal subunit protein bL32 (56 aa).

Residues 1–34 (MAVQQNKPTRSKRGMRRSHDALTTSTVSVDKASG) form a disordered region.

It belongs to the bacterial ribosomal protein bL32 family.

This is Large ribosomal subunit protein bL32 from Sodalis glossinidius (strain morsitans).